The chain runs to 1102 residues: Phosphatidylinositol 4,5-bisphosphate 3-kinase catalytic subunit gamma isoform (1102 aa).

One can recognise a PI3K-ABD domain in the interval 34–141 (SMELIPIEFV…PGQIHVVQRH (108 aa)). One can recognise a PI3K-RBD domain in the interval 217-309 (NNCVFIVIHR…GEEIHLVLDT (93 aa)). A C2 PI3K-type domain is found at 357–521 (CDRKFRVKIR…NSMSISILLD (165 aa)). The PIK helical domain occupies 541-723 (DRVRAEMPNQ…AVILEAYLRG (183 aa)). Residues 797–1080 (VIEKCKVMAS…QIEVCRDKGW (284 aa)) form the PI3K/PI4K catalytic domain. Residues 803 to 809 (VMASKKK) are G-loop. Residues 829–838 (GIIFKHGDDL) and 864–872 (LLPYGCIST) each bind ATP. A catalytic loop region spans residues 943–951 (GIGDRHNDN). Residue 961–969 (FHIDFGHIL) participates in ATP binding. The activation loop stretch occupies residues 962–988 (HIDFGHILGNYKSFLGINKERVPFVLT). At Thr-1024 the chain carries Phosphothreonine; by PKA. Phosphoserine; by autocatalysis is present on Ser-1101.

This sequence belongs to the PI3/PI4-kinase family. As to quaternary structure, heterodimer of a catalytic subunit PIK3CG and a PIK3R5 or PIK3R6 regulatory subunit. Interacts with GRK2 through the PIK helical domain. Interaction with GRK2 is required for targeting to agonist-occupied receptor. Interacts with PDE3B; regulates PDE3B activity and thereby cAMP levels in cells. Interacts with TPM2. Interacts with EPHA8; regulates integrin-mediated cell adhesion to substrate. Interacts with HRAS; the interaction is required for membrane recruitment and beta-gamma G protein dimer-dependent activation of the PI3K gamma complex PIK3CG:PIK3R6. Post-translationally, autophosphorylation at Ser-1101 has no effect on the phosphatidylinositol-4,5-bisphosphate 3-kinase activity.

The protein resides in the cytoplasm. It is found in the cell membrane. It carries out the reaction a 1,2-diacyl-sn-glycero-3-phospho-(1D-myo-inositol-4,5-bisphosphate) + ATP = a 1,2-diacyl-sn-glycero-3-phospho-(1D-myo-inositol-3,4,5-trisphosphate) + ADP + H(+). The enzyme catalyses a 1,2-diacyl-sn-glycero-3-phospho-(1D-myo-inositol) + ATP = a 1,2-diacyl-sn-glycero-3-phospho-(1D-myo-inositol-3-phosphate) + ADP + H(+). The catalysed reaction is a 1,2-diacyl-sn-glycero-3-phospho-(1D-myo-inositol 4-phosphate) + ATP = a 1,2-diacyl-sn-glycero-3-phospho-(1D-myo-inositol-3,4-bisphosphate) + ADP + H(+). It catalyses the reaction L-seryl-[protein] + ATP = O-phospho-L-seryl-[protein] + ADP + H(+). It functions in the pathway phospholipid metabolism; phosphatidylinositol phosphate biosynthesis. Its activity is regulated as follows. Activated by both the alpha and the beta-gamma G proteins following stimulation of G protein-coupled receptors (GPCRs). Activation by GPCRs is assisted by the regulatory subunits (PIK3R5 or PIK3R6) leading to the translocation from the cytosol to the plasma membrane and to kinase activation. When bound to PIK3R5 the PI3K activity of PIK3CG could be activated greater than 100-fold by the beta-gamma G proteins. Its function is as follows. Phosphoinositide-3-kinase (PI3K) that phosphorylates PtdIns(4,5)P2 (Phosphatidylinositol 4,5-bisphosphate) to generate phosphatidylinositol 3,4,5-trisphosphate (PIP3). PIP3 plays a key role by recruiting PH domain-containing proteins to the membrane, including AKT1 and PDPK1, activating signaling cascades involved in cell growth, survival, proliferation, motility and morphology. Links G-protein coupled receptor activation to PIP3 production. Involved in immune, inflammatory and allergic responses. Modulates leukocyte chemotaxis to inflammatory sites and in response to chemoattractant agents. May control leukocyte polarization and migration by regulating the spatial accumulation of PIP3 and by regulating the organization of F-actin formation and integrin-based adhesion at the leading edge. Controls motility of dendritic cells. Participates in T-lymphocyte migration. Regulates T-lymphocyte proliferation and cytokine production. Required for B-lymphocyte development and signaling. Together with other PI3Ks are involved in the oxidative burst produced by neutrophils in response to chemotactic agents. Together with PIK3CD regulate neutrophil extravasation. Together with PIK3CB promotes platelet aggregation and thrombosis. Regulates alpha-IIb/beta-3 integrins (ITGA2B/ ITGB3) adhesive function in platelets downstream of P2Y12 through a lipid kinase activity-independent mechanism. May have also a lipid kinase activity-dependent function in platelet aggregation. Involved in endothelial progenitor cell migration. Negative regulator of cardiac contractility. Modulates cardiac contractility by anchoring protein kinase A (PKA) and PDE3B activation, reducing cAMP levels. Regulates cardiac contractility also by promoting beta-adrenergic receptor internalization by binding to GRK2 and by non-muscle tropomyosin phosphorylation. Also has serine/threonine protein kinase activity: both lipid and protein kinase activities are required for beta-adrenergic receptor endocytosis. May also have a scaffolding role in modulating cardiac contractility. Contribute to cardiac hypertrophy under pathological stress. Through simultaneous binding of PDE3B to RAPGEF3 and PIK3R6 is assembled in a signaling complex in which the PI3K gamma complex is activated by RAPGEF3 and which is involved in angiogenesis. In neutrophils, participates in a phospholipase C-activating N-formyl peptide-activated GPCR (G protein-coupled receptor) signaling pathway downstream of RASGRP4-mediated Ras-activation, to promote neutrophil functional responses. The sequence is that of Phosphatidylinositol 4,5-bisphosphate 3-kinase catalytic subunit gamma isoform (PIK3CG) from Sus scrofa (Pig).